The primary structure comprises 127 residues: Aspartate 1-decarboxylase (127 aa).

Serine 25 (schiff-base intermediate with substrate; via pyruvic acid) is an active-site residue. Pyruvic acid (Ser) is present on serine 25. Threonine 57 serves as a coordination point for substrate. Catalysis depends on tyrosine 58, which acts as the Proton donor. 73–75 contacts substrate; it reads GAA.

It belongs to the PanD family. In terms of assembly, heterooctamer of four alpha and four beta subunits. Requires pyruvate as cofactor. In terms of processing, is synthesized initially as an inactive proenzyme, which is activated by self-cleavage at a specific serine bond to produce a beta-subunit with a hydroxyl group at its C-terminus and an alpha-subunit with a pyruvoyl group at its N-terminus.

The protein localises to the cytoplasm. The catalysed reaction is L-aspartate + H(+) = beta-alanine + CO2. The protein operates within cofactor biosynthesis; (R)-pantothenate biosynthesis; beta-alanine from L-aspartate: step 1/1. Catalyzes the pyruvoyl-dependent decarboxylation of aspartate to produce beta-alanine. This is Aspartate 1-decarboxylase from Neisseria meningitidis serogroup B (strain ATCC BAA-335 / MC58).